The chain runs to 98 residues: NADH-ubiquinone oxidoreductase chain 4L (98 aa).

The next 3 membrane-spanning stretches (helical) occupy residues 1–21 (MSMV…GLLI), 30–50 (LLCL…TILT), and 61–81 (IILL…LVMI).

The protein belongs to the complex I subunit 4L family. In terms of assembly, core subunit of respiratory chain NADH dehydrogenase (Complex I) which is composed of 45 different subunits.

It localises to the mitochondrion inner membrane. The catalysed reaction is a ubiquinone + NADH + 5 H(+)(in) = a ubiquinol + NAD(+) + 4 H(+)(out). Core subunit of the mitochondrial membrane respiratory chain NADH dehydrogenase (Complex I) which catalyzes electron transfer from NADH through the respiratory chain, using ubiquinone as an electron acceptor. Part of the enzyme membrane arm which is embedded in the lipid bilayer and involved in proton translocation. This is NADH-ubiquinone oxidoreductase chain 4L (MT-ND4L) from Gulo gulo (Wolverine).